The chain runs to 88 residues: Acylphosphatase (88 aa).

Residues 3 to 88 enclose the Acylphosphatase-like domain; that stretch reads AARFIFTGVV…IPTTEAFVTG (86 aa). Residues R18 and N36 contribute to the active site.

Belongs to the acylphosphatase family.

It catalyses the reaction an acyl phosphate + H2O = a carboxylate + phosphate + H(+). This is Acylphosphatase (acyP) from Xanthomonas campestris pv. campestris (strain 8004).